A 484-amino-acid chain; its full sequence is Solute carrier family 40 member 1 (484 aa).

11 helical membrane-spanning segments follow: residues 58 to 78 (LLTA…GPIV), 94 to 114 (WLLL…ALLV), 123 to 143 (GFPA…LAAL), 189 to 209 (VLSG…ALAA), 212 to 232 (LAAV…FPAL), 279 to 299 (VVLP…FGTL), 308 to 328 (GIPA…GIAA), 346 to 366 (LWSI…VWAG), 377 to 397 (LMGG…AVMQ), 413 to 433 (GVQN…GIIV), and 442 to 462 (LIVL…MHVY).

The protein belongs to the ferroportin (FP) (TC 2.A.100) family. SLC40A subfamily.

It is found in the membrane. Functionally, may be involved in iron transport and iron homeostasis. This Oryza sativa subsp. japonica (Rice) protein is Solute carrier family 40 member 1.